The primary structure comprises 222 residues: Uridine diphosphate glucose pyrophosphatase NUDT14 (222 aa).

Residues 38 to 206 form the Nudix hydrolase domain; sequence KTHDSVTILM…DIPKTLGVIY (169 aa). The Nudix box signature appears at 111 to 129; the sequence is PGLSLEEAACKEAWEECGY.

It belongs to the Nudix hydrolase family. In terms of assembly, homodimer. Mg(2+) is required as a cofactor.

The protein resides in the cytoplasm. It carries out the reaction UDP-sugar + H2O = UMP + alpha-D-aldose 1-phosphate.. Hydrolyzes UDP-glucose to glucose 1-phosphate and UMP and ADP-ribose to ribose 5-phosphate and AMP. The physiological substrate is probably UDP-glucose. Poor activity on other substrates such as ADP-glucose, CDP-glucose, GDP-glucose and GDP-mannose. In Mus musculus (Mouse), this protein is Uridine diphosphate glucose pyrophosphatase NUDT14 (Nudt14).